The primary structure comprises 220 residues: Phosphatidylinositol phosphate synthase (220 aa).

The next 2 helical transmembrane spans lie at 21–46 and 52–72; these read LLRAGFTPDTVTIFGTAASVVAALTL and LFWGGMAVWLFAMFDMLDGAM. 29 to 32 serves as a coordination point for a CDP-1,2-diacyl-sn-glycerol; it reads DTVT. The Mg(2+) site is built by Asp-66 and Asp-69. A CDP-1,2-diacyl-sn-glycerol-binding residues include Gly-70, Arg-74, and Thr-80. Asp-87 and Asp-91 together coordinate Mg(2+). Asp-91 acts as the Proton acceptor in catalysis. 4 helical membrane-spanning segments follow: residues 93-110, 116-134, 154-171, and 177-194; these read VADGAVFAGLVWWAAFGW, VVATLICMITSQVISYVKA, LIIVLAGAIFSGGFGVQW, and MWVLAVASLVTVAQRMHA.

It belongs to the CDP-alcohol phosphatidyltransferase class-I family. As to quaternary structure, homodimer. It depends on Mg(2+) as a cofactor.

The protein localises to the cell membrane. It catalyses the reaction a CDP-1,2-diacyl-sn-glycerol + 1D-myo-inositol 3-phosphate = a 1,2-diacyl-sn-glycero-3-phospho-(1D-myo-inositol-3-phosphate) + CMP + H(+). It carries out the reaction 1,2-di-(9Z-octadecenoyl)-sn-glycero-3-cytidine-5'-diphosphate + 1D-myo-inositol 3-phosphate = 1,2-di-(9Z-octadecenoyl)-sn-glycero-3-phospho-(1D-myo-inositol-3-phosphate) + CMP + H(+). It participates in phospholipid metabolism; phosphatidylinositol phosphate biosynthesis. In terms of biological role, catalyzes the conjugation of the 1'-hydroxyl group of D-myo-inositol-3-phosphate (also named L-myo-inositol-1-phosphate) with a lipid tail of cytidine diphosphate diacylglycerol (CDP-DAG), forming phosphatidylinositol phosphate (PIP) and CMP. PIP is a precursor of phosphatidylinositol (PI) which is an essential lipid for mycobacteria required for formation of their cell wall. The polypeptide is Phosphatidylinositol phosphate synthase (Mycobacteroides abscessus (strain ATCC 19977 / DSM 44196 / CCUG 20993 / CIP 104536 / JCM 13569 / NCTC 13031 / TMC 1543 / L948) (Mycobacterium abscessus)).